The following is a 544-amino-acid chain: MSNETLSADVVIIGAGICGSLLAHKLVRNGLSVLLLDAGPRRDRSQIVENWRNMPPDNKSQYDYATPYPSVPWAPHTNYFPDNNYLIVKGPDRTAYKQGIIKGVGGTTWHWAASSWRYLPNDFKLHSTYGVGRDYAMSYDELEPYYYEAECEMGVMGPNGEEITPSAPRQNPWPMTSMPYGYGDRTFTEIVSKLGFSNTPVPQARNSRPYDGRPQCCGNNNCMPICPIGAMYNGVYAAIKAEKLGAKIIPNAVVYAMETDAKNRITAISFYDPDKQSHRVVAKTFVIAANGIETPKLLLLAANDRNPHGIANSSDLVGRNMMDHPGIGMSFQSAEPIWAGGGSVQMSSITNFRDGDFRSEYAATQIGYNNTAQNSRAGMKALSMGLVGKKLDEEIRRRTAHGVDIYANHEVLPDPNNRLVLSKDYKDALGIPHPEVTYDVGEYVRKSAAISRQRLMDIAKAMGGTEIEMTPYFTPNNHITGGTIMGHDPRDSVVDKWLRTHDHSNLFLATGATMAASGTVNSTLTMAALSLRAADAILNDLKQG.

14–30 (GAGICGSLLAHKLVRNG) serves as a coordination point for FAD. His478 acts as the Proton acceptor in catalysis.

This sequence belongs to the GMC oxidoreductase family. Heterotrimer composed of FdhL, FdhS and FdhC. FAD is required as a cofactor.

The protein localises to the cell membrane. The enzyme catalyses keto-D-fructose + a ubiquinone = 5-dehydro-D-fructose + a ubiquinol. In terms of biological role, catalytic subunit of fructose dehydrogenase, an enzyme that catalyzes the oxidation of D-fructose to produce 5-keto-D-fructose. The chain is Fructose dehydrogenase large subunit (fdhL) from Gluconobacter japonicus.